The primary structure comprises 103 residues: BLOC-1-related complex subunit 7 (103 aa).

The protein belongs to the BORCS7 family.

It is found in the lysosome membrane. Functionally, as part of a BORC-like complex may play a role in lysosomes movement and localization at the cell periphery. Associated with the cytosolic face of lysosomes, this complex may couple lysosomes to microtubule plus-end-directed kinesin motor. In Danio rerio (Zebrafish), this protein is BLOC-1-related complex subunit 7.